Consider the following 476-residue polypeptide: Cysteine--tRNA ligase (476 aa).

Cys29 provides a ligand contact to Zn(2+). The 'HIGH' region signature appears at 31 to 41 (PTVYDYPHLGH). Cys209, His234, and Glu238 together coordinate Zn(2+). Positions 266–270 (KMSKS) match the 'KMSKS' region motif. Lys269 contributes to the ATP binding site.

The protein belongs to the class-I aminoacyl-tRNA synthetase family. It depends on Zn(2+) as a cofactor.

It is found in the cytoplasm. It catalyses the reaction tRNA(Cys) + L-cysteine + ATP = L-cysteinyl-tRNA(Cys) + AMP + diphosphate. In Thermococcus gammatolerans (strain DSM 15229 / JCM 11827 / EJ3), this protein is Cysteine--tRNA ligase.